The primary structure comprises 429 residues: Putative GMP synthase [glutamine-hydrolyzing] (429 aa).

Positions 10-118 constitute a Glutamine amidotransferase type-1 domain; sequence TIFILDFGSQ…GYTPIHLYPC (109 aa). The Nucleophile role is filled by Cys87. The GMPS ATP-PPase domain occupies 119-304; it reads ELFKHIVDCE…LGLSSYLLDR (186 aa). Active-site residues include His176 and Glu178.

In terms of assembly, homodimer.

The catalysed reaction is XMP + L-glutamine + ATP + H2O = GMP + L-glutamate + AMP + diphosphate + 2 H(+). It functions in the pathway purine metabolism; GMP biosynthesis; GMP from XMP (L-Gln route): step 1/1. In terms of biological role, catalyzes the synthesis of GMP from XMP. This chain is Putative GMP synthase [glutamine-hydrolyzing] (guaA), found in Chlamydia pneumoniae (Chlamydophila pneumoniae).